Here is a 118-residue protein sequence, read N- to C-terminus: T cell receptor gamma variable 5 (118 aa).

The first 17 residues, 1–17, serve as a signal peptide directing secretion; the sequence is MRWALLVLLAFLSPASQ. In terms of domain architecture, Ig-like spans 18-118; that stretch reads KSSNLEGGTK…GVYYCATWDR (101 aa). Cysteines 41 and 113 form a disulfide. An N-linked (GlcNAc...) asparagine glycan is attached at N106.

As to quaternary structure, gamma-delta TR is a heterodimer composed of a gamma and delta chain; disulfide-linked. The gamma-delta TR is associated with the transmembrane signaling CD3 coreceptor proteins following the stoichiometry: a single gamma-delta TR heterodimer associates with one CD3D-CD3E heterodimer, one CD3G-CD3E heterodimer and one CD247 homodimer forming a stable octameric structure. Upon activation, gamma-delta TR complex associates with FCER1G to initiate intracellular signaling.

It is found in the cell membrane. V region of the variable domain of T cell receptor (TR) gamma chain that participates in the antigen recognition. Gamma-delta TRs recognize a variety of self and foreign non-peptide antigens frequently expressed at the epithelial boundaries between the host and external environment, including endogenous lipids presented by MH-like protein CD1D and phosphoantigens presented by butyrophilin-like molecule BTN3A1. Upon antigen recognition induces rapid, innate-like immune responses involved in pathogen clearance and tissue repair. Binding of gamma-delta TR complex to antigen triggers phosphorylation of immunoreceptor tyrosine-based activation motifs (ITAMs) in the CD3 chains by the LCK and FYN kinases, allowing the recruitment, phosphorylation, and activation of ZAP70 that facilitates phosphorylation of the scaffolding proteins LCP2 and LAT. This lead to the formation of a supramolecular signalosome that recruits the phospholipase PLCG1, resulting in calcium mobilization and ERK activation, ultimately leading to T cell expansion and differentiation into effector cells. Gamma-delta TRs are produced through somatic rearrangement of a limited repertoire of variable (V), diversity (D), and joining (J) genes. The potential diversity of gamma-delta TRs is conferred by the unique ability to rearrange (D) genes in tandem and to utilize all three reading frames. The combinatorial diversity is considerably increased by the sequence exonuclease trimming and random nucleotide (N) region additions which occur during the V-(D)-J rearrangements. The protein is T cell receptor gamma variable 5 of Homo sapiens (Human).